A 31-amino-acid chain; its full sequence is Cytochrome b6-f complex subunit 6 (31 aa).

The helical transmembrane segment at 4 to 26 threads the bilayer; that stretch reads LTSYFGFLLAALTITSALFIGLS.

Belongs to the PetL family. The 4 large subunits of the cytochrome b6-f complex are cytochrome b6, subunit IV (17 kDa polypeptide, PetD), cytochrome f and the Rieske protein, while the 4 small subunits are PetG, PetL, PetM and PetN. The complex functions as a dimer.

The protein resides in the plastid. It is found in the chloroplast thylakoid membrane. Its function is as follows. Component of the cytochrome b6-f complex, which mediates electron transfer between photosystem II (PSII) and photosystem I (PSI), cyclic electron flow around PSI, and state transitions. PetL is important for photoautotrophic growth as well as for electron transfer efficiency and stability of the cytochrome b6-f complex. This Aethionema cordifolium (Lebanon stonecress) protein is Cytochrome b6-f complex subunit 6.